The chain runs to 563 residues: Rhotekin (563 aa).

Arg14 carries the omega-N-methylarginine modification. Residues 17–98 form the REM-1 domain; that stretch reads ALEMEFKRGR…LQRRKEAQVL (82 aa). 2 positions are modified to phosphoserine: Ser30 and Ser106. The segment at 96–116 is disordered; the sequence is QVLGKTSRRPSDSGPPAERSP. The residue at position 230 (Arg230) is an Asymmetric dimethylarginine. A Phosphoserine modification is found at Ser232. The region spanning 309 to 416 is the PH domain; sequence QPTASGTLRV…WMEALWQLFF (108 aa). The disordered stretch occupies residues 518-563; that stretch reads TFSLDAVPPDHSPRARSVAPLPPQRSPRTRGLCSKGQPRTWLQSPV. Ser520, Ser529, and Ser543 each carry phosphoserine.

Interacts via its C-terminal region with the TAX1BP3 PDZ domain. This interaction facilitates Rho-mediated activation of the c-Fos serum response element (SRE). Interacts with SEPT9. Specifically binds to GTP-bound RHOA, RHOB and RHOC and inhibits their GTPase activity. Highly expressed in prostate, moderately in kidney, heart, brain, spleen, testis, placenta, small intestine, pancreas, skeletal muscle and peripheral blood leukocytes, and weakly in ovary, colon and thymus. Weakly expressed in all normal cell lines tested. Overexpressed in various cancer cell lines.

Its function is as follows. Mediates Rho signaling to activate NF-kappa-B and may confer increased resistance to apoptosis to cells in gastric tumorigenesis. May play a novel role in the organization of septin structures. This is Rhotekin from Homo sapiens (Human).